The chain runs to 427 residues: Trigger factor (427 aa).

A PPIase FKBP-type domain is found at 163–248 (GDTAVIDFEG…VHEIKAKELP (86 aa)).

The protein belongs to the FKBP-type PPIase family. Tig subfamily.

The protein localises to the cytoplasm. It carries out the reaction [protein]-peptidylproline (omega=180) = [protein]-peptidylproline (omega=0). Functionally, involved in protein export. Acts as a chaperone by maintaining the newly synthesized protein in an open conformation. Functions as a peptidyl-prolyl cis-trans isomerase. This is Trigger factor from Bacillus cytotoxicus (strain DSM 22905 / CIP 110041 / 391-98 / NVH 391-98).